A 116-amino-acid chain; its full sequence is Tachykinin-3 (116 aa).

The signal sequence occupies residues 1–20 (MRSAMLFAAVLALSLAWTFG). The propeptide occupies 21-79 (AVCEEPQGQGGRLSKDSDLYQLPPSLLRRLYDSRPVSLEGLLKVLSKASVGPKETSLPQ). Met-91 is subject to Methionine amide. Positions 93-116 (KRNSQPDTPTDVVEENTPSFGILK) are disordered. Positions 95-116 (NSQPDTPTDVVEENTPSFGILK) are excised as a propeptide.

The protein belongs to the tachykinin family.

It localises to the secreted. Its function is as follows. Tachykinins are active peptides which excite neurons, evoke behavioral responses, are potent vasodilators and secretagogues, and contract (directly or indirectly) many smooth muscles. Is a critical central regulator of gonadal function. This Mus musculus (Mouse) protein is Tachykinin-3 (Tac3).